Reading from the N-terminus, the 201-residue chain is Probable molybdenum cofactor guanylyltransferase (201 aa).

GTP is bound by residues 6 to 8 (LAG), Lys-18, Asp-67, and Asp-92. Position 92 (Asp-92) interacts with Mg(2+).

The protein belongs to the MobA family. The cofactor is Mg(2+).

The protein localises to the cytoplasm. The catalysed reaction is Mo-molybdopterin + GTP + H(+) = Mo-molybdopterin guanine dinucleotide + diphosphate. Functionally, transfers a GMP moiety from GTP to Mo-molybdopterin (Mo-MPT) cofactor (Moco or molybdenum cofactor) to form Mo-molybdopterin guanine dinucleotide (Mo-MGD) cofactor. This Thermococcus kodakarensis (strain ATCC BAA-918 / JCM 12380 / KOD1) (Pyrococcus kodakaraensis (strain KOD1)) protein is Probable molybdenum cofactor guanylyltransferase.